The chain runs to 553 residues: Heterochromatin protein 1-binding protein 3 (553 aa).

N-acetylalanine is present on alanine 2. The residue at position 6 (serine 6) is a Phosphoserine. Residues 30–131 are disordered; the sequence is LGEKADDSTM…SKEKEKKVKK (102 aa). At threonine 51 the chain carries Phosphothreonine. Over residues 60–71 the composition is skewed to acidic residues; sequence GEEEKPEPDGSS. Lysine 64 participates in a covalent cross-link: Glycyl lysine isopeptide (Lys-Gly) (interchain with G-Cter in SUMO2). Threonine 85 is subject to Phosphothreonine. Basic and acidic residues predominate over residues 91-127; that stretch reads REAEQPKGEPESGEKEESKSAEETKKEEKDQSKEKEK. A Glycyl lysine isopeptide (Lys-Gly) (interchain with G-Cter in SUMO2) cross-link involves residue lysine 97. A phosphoserine mark is found at serine 142, serine 155, and serine 156. The H15 1 domain maps to 157-232; sequence PRPKMDAILT…GASGSFVVVQ (76 aa). Lysine 190 is subject to N6-acetyllysine. The segment at 231–251 is disordered; the sequence is VQKSKTPQKSKNRKKGSAVDP. Residues 236–246 show a composition bias toward basic residues; sequence TPQKSKNRKKG. A Phosphoserine modification is found at serine 247. Positions 253–257 match the PxVxL motif motif; it reads PQVKL. H15 domains are found at residues 253–328 and 335–411; these read PQVK…QLKK and LGGS…QLCF. Residue lysine 256 forms a Glycyl lysine isopeptide (Lys-Gly) (interchain with G-Cter in SUMO2) linkage. The disordered stretch occupies residues 422–553; the sequence is PKKVSDGSED…MKKKSFKTKK (132 aa). A compositionally biased stretch (acidic residues) spans 428-449; that stretch reads GSEDEDEEEDEEESSEDSEDEE. Phosphoserine is present on residues serine 441, serine 442, and serine 445. Basic residues-rich tracts occupy residues 488 to 509 and 542 to 553; these read GKVRPLPKKAPPKAKTPARKGR and SAMKKKSFKTKK.

In terms of assembly, interacts (via PxVxL motif) with CBX5.

The protein localises to the nucleus. The protein resides in the chromosome. In terms of biological role, component of heterochromatin that maintains heterochromatin integrity during G1/S progression and regulates the duration of G1 phase to critically influence cell proliferative capacity. May play a role in hypoxia-induced oncogenesis. The sequence is that of Heterochromatin protein 1-binding protein 3 (Hp1bp3) from Rattus norvegicus (Rat).